The following is a 475-amino-acid chain: tRNA-2-methylthio-N(6)-dimethylallyladenosine synthase (475 aa).

An MTTase N-terminal domain is found at 3-120 (KKLHIKTWGC…LPEMIDQIKD (118 aa)). Residues C12, C49, C83, C157, C161, and C164 each coordinate [4Fe-4S] cluster. Residues 143-375 (RAEGPSAFVS…QDRITQQAMR (233 aa)) form the Radical SAM core domain. One can recognise a TRAM domain in the interval 378–441 (RQMVGTVQRI…TNSLRGVFIR (64 aa)).

The protein belongs to the methylthiotransferase family. MiaB subfamily. As to quaternary structure, monomer. [4Fe-4S] cluster is required as a cofactor.

The protein resides in the cytoplasm. The enzyme catalyses N(6)-dimethylallyladenosine(37) in tRNA + (sulfur carrier)-SH + AH2 + 2 S-adenosyl-L-methionine = 2-methylsulfanyl-N(6)-dimethylallyladenosine(37) in tRNA + (sulfur carrier)-H + 5'-deoxyadenosine + L-methionine + A + S-adenosyl-L-homocysteine + 2 H(+). In terms of biological role, catalyzes the methylthiolation of N6-(dimethylallyl)adenosine (i(6)A), leading to the formation of 2-methylthio-N6-(dimethylallyl)adenosine (ms(2)i(6)A) at position 37 in tRNAs that read codons beginning with uridine. In Shewanella pealeana (strain ATCC 700345 / ANG-SQ1), this protein is tRNA-2-methylthio-N(6)-dimethylallyladenosine synthase.